We begin with the raw amino-acid sequence, 714 residues long: Pre-mRNA-splicing factor CLF1 (714 aa).

12 HAT repeats span residues 48–80 (SFQL…WEVK), 83–115 (HDFP…FELS), 117–149 (KNIT…TEET), 151–182 (KNYQ…YEKR), 184–215 (DEYD…FEMN), 265–305 (KEYE…FEKS), 315–347 (SIMI…ILQQ), 349–384 (DNNE…IWVK), 394–430 (GSIE…FEIR), 435–470 (NGLA…LEQK), 472–510 (GEWD…FEKN), and 555–586 (MRYA…FESS).

Belongs to the crooked-neck family. As to quaternary structure, associated with the spliceosome.

The protein resides in the nucleus. Functionally, involved in pre-mRNA splicing and cell cycle progression. Required for the spliceosome assembly and initiation of the DNA replication. The protein is Pre-mRNA-splicing factor CLF1 (CLF1) of Debaryomyces hansenii (strain ATCC 36239 / CBS 767 / BCRC 21394 / JCM 1990 / NBRC 0083 / IGC 2968) (Yeast).